The sequence spans 326 residues: DNA polymerase III subunit delta' (326 aa).

As to quaternary structure, DNA polymerase III contains a core (composed of alpha, epsilon and theta chains) that associates with a tau subunit. This core dimerizes to form the POLIII' complex. PolIII' associates with the gamma complex (composed of gamma, delta, delta', psi and chi chains) and with the beta chain to form the complete DNA polymerase III complex.

The enzyme catalyses DNA(n) + a 2'-deoxyribonucleoside 5'-triphosphate = DNA(n+1) + diphosphate. Its function is as follows. DNA polymerase III is a complex, multichain enzyme responsible for most of the replicative synthesis in bacteria. This DNA polymerase also exhibits 3' to 5' exonuclease activity. The chain is DNA polymerase III subunit delta' (holB) from Buchnera aphidicola subsp. Acyrthosiphon pisum (strain APS) (Acyrthosiphon pisum symbiotic bacterium).